Reading from the N-terminus, the 112-residue chain is MLDEKSSNTTSVVVLCTAPDEATAQDLAAKVLAEKLAACATLIPGATSLYYWEGKLEQEYEVQMILKTTVSHQQAMLECLKSHHPYQTPELLVLPVTHGDTDYLSWLNASLR.

Residues Cys-16, His-83, and His-84 each coordinate Cu cation.

It belongs to the CutA family. Homotrimer. Cu cation serves as cofactor.

It localises to the cytoplasm. Involved in resistance toward heavy metals. The polypeptide is Divalent-cation tolerance protein CutA (Escherichia coli O81 (strain ED1a)).